The sequence spans 297 residues: uncharacterized protein (297 aa).

Residues 191–211 (VMIILSCSNITILAVLSIVGL) traverse the membrane as a helical segment. Positions 275–287 (SKTSETQSVSGST) are enriched in polar residues. Residues 275 to 297 (SKTSETQSVSGSTHSDEKLTAPM) are disordered. Residues 288-297 (HSDEKLTAPM) are compositionally biased toward basic and acidic residues.

Its subcellular location is the host membrane. This is an uncharacterized protein from Cryphonectria parasitica mycoreovirus 1 (strain 9B21) (CpMYRV-1).